A 383-amino-acid chain; its full sequence is Anhydro-N-acetylmuramic acid kinase (383 aa).

9–16 (GTSLDGID) is a binding site for ATP.

It belongs to the anhydro-N-acetylmuramic acid kinase family.

The enzyme catalyses 1,6-anhydro-N-acetyl-beta-muramate + ATP + H2O = N-acetyl-D-muramate 6-phosphate + ADP + H(+). It participates in amino-sugar metabolism; 1,6-anhydro-N-acetylmuramate degradation. Its pathway is cell wall biogenesis; peptidoglycan recycling. Functionally, catalyzes the specific phosphorylation of 1,6-anhydro-N-acetylmuramic acid (anhMurNAc) with the simultaneous cleavage of the 1,6-anhydro ring, generating MurNAc-6-P. Is required for the utilization of anhMurNAc either imported from the medium or derived from its own cell wall murein, and thus plays a role in cell wall recycling. This chain is Anhydro-N-acetylmuramic acid kinase, found in Clostridioides difficile (strain 630) (Peptoclostridium difficile).